The sequence spans 578 residues: Zinc finger protein 248 (578 aa).

The KRAB domain occupies 8–78; the sequence is VSFKDVCVDF…LEKGFPSQDP (71 aa). The C2H2-type 1; degenerate zinc-finger motif lies at 239-263; the sequence is TVCKYNECGRTFIESLKLNISQRPH. Lys-340 is covalently cross-linked (Glycyl lysine isopeptide (Lys-Gly) (interchain with G-Cter in SUMO2)). 7 consecutive C2H2-type zinc fingers follow at residues 379–401, 407–429, 435–457, 463–485, 491–513, 519–542, and 547–569; these read FECGECGKTFWEKSNLTQHQRTH, YECTECGKAFCQKPHLTNHQRTH, YECKQCGKTFCVKSNLTEHQRTH, YECNACGKSFCHRSALTVHQRTH, FICNECGKSFCVKSNLIVHQRTH, YKCNECGKTFCEKSALTKHQRTHT, and YECNACGKTFSQRSVLTKHQRIH.

The protein belongs to the krueppel C2H2-type zinc-finger protein family.

Its subcellular location is the nucleus. In terms of biological role, may be involved in transcriptional regulation. The protein is Zinc finger protein 248 (ZNF248) of Pongo abelii (Sumatran orangutan).